The following is a 312-amino-acid chain: L-lactate dehydrogenase (312 aa).

NAD(+) contacts are provided by residues V11, D32, R37, and 76 to 77; that span reads GA. Substrate-binding positions include Q79, R85, and 117–120; that span reads NPVD. Residues 115–117 and T140 contribute to the NAD(+) site; that span reads VSN. A substrate-binding site is contributed by 145–148; that stretch reads DTAR. Beta-D-fructose 1,6-bisphosphate is bound by residues R150 and H165. H172 serves as the catalytic Proton acceptor. Y217 is modified (phosphotyrosine). A substrate-binding site is contributed by T226.

It belongs to the LDH/MDH superfamily. LDH family. In terms of assembly, homotetramer.

It localises to the cytoplasm. It catalyses the reaction (S)-lactate + NAD(+) = pyruvate + NADH + H(+). The protein operates within fermentation; pyruvate fermentation to lactate; (S)-lactate from pyruvate: step 1/1. Allosterically activated by fructose 1,6-bisphosphate (FBP). In terms of biological role, catalyzes the conversion of lactate to pyruvate. In Pseudothermotoga lettingae (strain ATCC BAA-301 / DSM 14385 / NBRC 107922 / TMO) (Thermotoga lettingae), this protein is L-lactate dehydrogenase.